A 390-amino-acid chain; its full sequence is EF-hand calcium-binding domain-containing protein 4A (390 aa).

Residues 1-27 are compositionally biased toward low complexity; the sequence is MSPRSTLRSPLPSRTARSSASSDTPSP. A disordered region spans residues 1-37; sequence MSPRSTLRSPLPSRTARSSASSDTPSPGADRQDRMSK. 2 EF-hand domains span residues 33 to 66 and 67 to 102; these read DRMS…QELP and LSPE…LVGS. Ca(2+) contacts are provided by D80, D82, N84, Y86, and E91. Positions 173–357 form a coiled coil; it reads SHLQDALKEK…DDKDAHQAQK (185 aa). Residues 206-234 form a disordered region; sequence DMESQLKEERERRQALDSMRQGDKKEQLL.

Belongs to the EFCAB4 family.

The polypeptide is EF-hand calcium-binding domain-containing protein 4A (cracr2b) (Danio rerio (Zebrafish)).